We begin with the raw amino-acid sequence, 239 residues long: NAD(P)H-hydrate epimerase (239 aa).

Residues 14–220 (AAALDQELMS…EMAEQYNLDI (207 aa)) form the YjeF N-terminal domain. (6S)-NADPHX is bound at residue 64–68 (NNGGD). 2 residues coordinate K(+): N65 and D126. (6S)-NADPHX-binding positions include 130–136 (GFSFSGE) and D159. S162 serves as a coordination point for K(+).

It belongs to the NnrE/AIBP family. K(+) is required as a cofactor.

It is found in the cytoplasm. Its subcellular location is the mitochondrion. The catalysed reaction is (6R)-NADHX = (6S)-NADHX. The enzyme catalyses (6R)-NADPHX = (6S)-NADPHX. Functionally, catalyzes the epimerization of the S- and R-forms of NAD(P)HX, a damaged form of NAD(P)H that is a result of enzymatic or heat-dependent hydration. This is a prerequisite for the S-specific NAD(P)H-hydrate dehydratase to allow the repair of both epimers of NAD(P)HX. This Phaeosphaeria nodorum (strain SN15 / ATCC MYA-4574 / FGSC 10173) (Glume blotch fungus) protein is NAD(P)H-hydrate epimerase.